The following is a 199-amino-acid chain: Inner membrane-spanning protein YciB (199 aa).

6 helical membrane passes run 7–27 (HPLF…AANA), 32–52 (FVAT…SYVV), 56–76 (IPLM…LTLV), 93–113 (LFAG…AIMF), 126–146 (VLTL…ELIW), and 153–173 (FWVN…AMMQ).

This sequence belongs to the YciB family.

The protein resides in the cell inner membrane. Its function is as follows. Plays a role in cell envelope biogenesis, maintenance of cell envelope integrity and membrane homeostasis. This Nitrobacter hamburgensis (strain DSM 10229 / NCIMB 13809 / X14) protein is Inner membrane-spanning protein YciB.